The chain runs to 843 residues: F-box only protein 11 (843 aa).

Positions 1–63 are disordered; that stretch reads MVAEESGPGA…RVSGKSQDLS (63 aa). A compositionally biased stretch (polar residues) spans 30–45; the sequence is PTKNSMEGASTSTTEN. An F-box domain is found at 69–115; it reads QYLQEKLPDEVVLKIFSYLLEQDLCRAACVCKRFSELANDPILWKRL. PbH1 repeat units follow at residues 311 to 333, 334 to 356, 357 to 379, 380 to 402, 403 to 425, 426 to 448, 449 to 471, 472 to 494, 495 to 517, 518 to 540, 541 to 563, 564 to 586, 587 to 609, 610 to 632, 633 to 655, 656 to 678, 679 to 701, 702 to 724, and 725 to 746; these read GACP…YITD, HAQG…WVKN, HGNP…FTFD, HGMG…EVKA, YANP…YVHE, KGRG…WITS, NSDP…YIFG, DGRG…QIRT, NSCP…YVHE, KGQG…WVTT, GSTP…YFYD, NGHG…QIRT, GSNP…LVYN, SGLG…WIKT, DSNP…CIFN, GGRG…LIST, NSHP…EITN, HATA…FLAS, and GVNV…EKAV. The UBR-type zinc finger occupies 749–820; the sequence is GQCLYKISSY…LSNPCTLAGE (72 aa).

As to quaternary structure, component of the SCF(FBXO11) complex consisting of CUL1, RBX1, SKP1 and FBXO11. Interacts with CIITA.

The protein localises to the nucleus. It localises to the chromosome. It functions in the pathway protein modification; protein ubiquitination. Functionally, substrate recognition component of a SCF (SKP1-CUL1-F-box protein) E3 ubiquitin-protein ligase complex which mediates the ubiquitination and subsequent proteasomal degradation of target proteins, such as DTL/CDT2, BCL6, SNAI1 and PRDM1/BLIMP1. The SCF(FBXO11) complex mediates ubiquitination and degradation of BCL6, thereby playing a role in the germinal center B-cells terminal differentiation toward memory B-cells and plasma cells. The SCF(FBXO11) complex also mediates ubiquitination and degradation of DTL, an important step for the regulation of TGF-beta signaling, cell migration and the timing of the cell-cycle progression and exit. The SCF(FBXO11) complex also catalyzes ubiquitination and degradation of GSK3B-phosphorylated SNAI1. Binds to and neddylates phosphorylated p53/TP53, inhibiting its transcriptional activity. Plays a role in the regulatiom of erythropoiesis but not myelopoiesis or megakaryopoiesis. Mechanistically, activates erythroid genes by mediating the degradation of BAHD1, a heterochromatin-associated protein that recruits corepressors to H3K27me3 marks. Participates in macrophage cell death and inflammation in response to bacterial toxins by regulating the expression of complement 5a receptor 1/C5AR1 and IL-1beta. Acts as a critical regulator to determine the level of MHC-II by mediating the recognition of degron at the P/S/T domain of CIITA leading to its ubiquitination and subsequent degradation via the proteasome. Participates in the antiviral repsonse by initiating the activation of TBK1-IRF3-IFN-I axis. Mediates the 'Lys-63'-linked ubiquitination of TRAF3 to strengthen the interaction between TRAF3 and TBK1. This chain is F-box only protein 11 (Fbxo11), found in Rattus norvegicus (Rat).